Consider the following 157-residue polypeptide: Protein Smg (157 aa).

Belongs to the Smg family.

The sequence is that of Protein Smg from Escherichia coli O7:K1 (strain IAI39 / ExPEC).